The primary structure comprises 216 residues: ATP phosphoribosyltransferase (216 aa).

It belongs to the ATP phosphoribosyltransferase family. Short subfamily. In terms of assembly, heteromultimer composed of HisG and HisZ subunits.

Its subcellular location is the cytoplasm. It catalyses the reaction 1-(5-phospho-beta-D-ribosyl)-ATP + diphosphate = 5-phospho-alpha-D-ribose 1-diphosphate + ATP. Its pathway is amino-acid biosynthesis; L-histidine biosynthesis; L-histidine from 5-phospho-alpha-D-ribose 1-diphosphate: step 1/9. In terms of biological role, catalyzes the condensation of ATP and 5-phosphoribose 1-diphosphate to form N'-(5'-phosphoribosyl)-ATP (PR-ATP). Has a crucial role in the pathway because the rate of histidine biosynthesis seems to be controlled primarily by regulation of HisG enzymatic activity. The chain is ATP phosphoribosyltransferase from Nitrosomonas europaea (strain ATCC 19718 / CIP 103999 / KCTC 2705 / NBRC 14298).